Consider the following 184-residue polypeptide: UPF0301 protein RSKD131_2391 (184 aa).

Belongs to the UPF0301 (AlgH) family.

In Cereibacter sphaeroides (strain KD131 / KCTC 12085) (Rhodobacter sphaeroides), this protein is UPF0301 protein RSKD131_2391.